We begin with the raw amino-acid sequence, 60 residues long: Serum basic protease inhibitor (60 aa).

The 51-residue stretch at 7-57 folds into the BPTI/Kunitz inhibitor domain; it reads CLEPPYTGPCKAAMIRYFYNAKAGFCETFVYGGCRAKSNNFKSAEDCMRTC. 3 disulfide bridges follow: Cys-7–Cys-57, Cys-16–Cys-40, and Cys-32–Cys-53.

It localises to the secreted. Functionally, this inhibitor has activity very similar to that of the basic protease inhibitor from bovine tissues. This Bos taurus (Bovine) protein is Serum basic protease inhibitor.